The primary structure comprises 780 residues: Catenin beta-1 (780 aa).

Positions 34-56 (GIHSGATTTAPSLSGKGNPEDDD) are disordered. ARM repeat units follow at residues 140 to 179 (NYQDDAELATRAIPELTKLLNDEDQVVVNKAAVMVHQLSK), 224 to 263 (REGLLAIFKSGGIPALVKMLGSPVDSVLFYAITTLHNLLL), 266 to 305 (EGAKMAVRLAGGLQKMVALLNKTNVKFLAITTDCLQILAY), 350 to 389 (SSNKPAIVEAGGMQALGLHLTDPSQRLVQNCLWTLRNLSD), 399 to 430 (GLLGTLVQLLGSDDINVVTCAAGILSNLTCNN), 431 to 472 (YKNK…HLTS), 478 to 518 (EMAQ…NLAL), 520 to 561 (PANH…QFVE), 583 to 622 (IHNRIVIRGLNTIPLFVQLLYSPIENIQRVAAGVLCELAQ), and 624 to 663 (KEAAEAIEAEGATAPLTELLHSRNEGVATYAAAVLFRMSE). A compositionally biased stretch (basic and acidic residues) spans 735–744 (EHEMAGHHPG). A disordered region spans residues 735–770 (EHEMAGHHPGPDYPVDGLPDLGHTQDLIDGLPPGDS).

It belongs to the beta-catenin family. Interacts with adnpa. Interacts with cdh1 during oogenesis and in the unfertilized egg. Interacts with ctnna1 and cdh2. Phosphorylation by gsk3b promotes ubiquitination and subsequent degradation by the proteasome. Post-translationally, ubiquitinated when phosphorylated by gsk3b, leading to its degradation. In terms of tissue distribution, expressed in the successional lamina, also expressed in both the epithelial and mesenchymal cells of the developing replacement tooth (at protein level). Expressed in the enamel organ as well as in the inner and outer dental epithelium during replacement tooth morphogenesis (at protein level). Expressed in the differentiated, polarized odontoblasts that line the dentine matrix as well as in the inner and outer dental epithelium during tooth cytodifferentiation (at protein level). Expressed in the reduced enamel organ, odontoblasts and weakly at the center of the dental papilla of the functional tooth as well as in the epithelial crypts surrounding the functional tooth (at protein level). Expressed in the liver (at protein level). Expressed at intercalated disks in the heart (at protein level). Expressed in the ovary.

The protein resides in the cytoplasm. The protein localises to the nucleus. It localises to the cell membrane. Its subcellular location is the cell junction. It is found in the adherens junction. In terms of biological role, key downstream component of the canonical Wnt signaling pathway. In the absence of Wnt, forms a complex with axin1, axin2, apc, csnk1a1 and gsk3b that promotes phosphorylation on N-terminal Ser and Thr residues and ubiquitination of ctnnb1 and its subsequent degradation by the proteasome. In the presence of Wnt ligand, ctnnb1 is not ubiquitinated and accumulates in the nucleus, where it acts as a coactivator for transcription factors of the TCF/LEF family, leading to activate Wnt responsive genes. Plays a key role in dorsoventral patterning: in prospective ventral blastomeres, its down-regulation by axin1 and axin2 leads to inhibit the Wnt signaling pathway, while in prospective dorsal blastomeres, degradation of axin results in stabilization and nuclear translocation of ctnnb1. This Danio rerio (Zebrafish) protein is Catenin beta-1.